We begin with the raw amino-acid sequence, 427 residues long: Enolase (427 aa).

Gln162 is a binding site for (2R)-2-phosphoglycerate. The active-site Proton donor is Glu206. 3 residues coordinate Mg(2+): Asp243, Glu286, and Asp313. Lys338, Arg367, Ser368, and Lys389 together coordinate (2R)-2-phosphoglycerate. Catalysis depends on Lys338, which acts as the Proton acceptor.

The protein belongs to the enolase family. Mg(2+) serves as cofactor.

It localises to the cytoplasm. Its subcellular location is the secreted. The protein resides in the cell surface. The catalysed reaction is (2R)-2-phosphoglycerate = phosphoenolpyruvate + H2O. It functions in the pathway carbohydrate degradation; glycolysis; pyruvate from D-glyceraldehyde 3-phosphate: step 4/5. Its function is as follows. Catalyzes the reversible conversion of 2-phosphoglycerate (2-PG) into phosphoenolpyruvate (PEP). It is essential for the degradation of carbohydrates via glycolysis. The chain is Enolase from Methanopyrus kandleri (strain AV19 / DSM 6324 / JCM 9639 / NBRC 100938).